A 235-amino-acid chain; its full sequence is Orotidine 5'-phosphate decarboxylase (235 aa).

Substrate-binding positions include D11, K33, 60 to 69 (DLKFHDIPNT), T119, R180, Q189, G209, and R210. The Proton donor role is filled by K62.

This sequence belongs to the OMP decarboxylase family. Type 1 subfamily. In terms of assembly, homodimer.

It carries out the reaction orotidine 5'-phosphate + H(+) = UMP + CO2. It participates in pyrimidine metabolism; UMP biosynthesis via de novo pathway; UMP from orotate: step 2/2. Its function is as follows. Catalyzes the decarboxylation of orotidine 5'-monophosphate (OMP) to uridine 5'-monophosphate (UMP). In Alkalilimnicola ehrlichii (strain ATCC BAA-1101 / DSM 17681 / MLHE-1), this protein is Orotidine 5'-phosphate decarboxylase.